The chain runs to 598 residues: Autophagy-related protein 22-1 (598 aa).

The segment at 1–20 is disordered; sequence MEDGGAGLRAPRYPAEDTSP. The helical transmembrane segment at 28–48 threads the bilayer; sequence GFFCYGLAAEVFAVCAVGSFL. Asparagine 74 and asparagine 80 each carry an N-linked (GlcNAc...) asparagine glycan. The next 3 helical transmembrane spans lie at 111 to 131, 159 to 179, and 182 to 202; these read SFAMYTFSASVFMQALALVSV, FLLVVPQIFVVGSFLTVICVV, and GCSFVILNSYLPLLVLNHPVV. Positions 207 to 238 are disordered; sequence DHPTASSSIPLQPISPQRSSRKSEESLHQVNR. A compositionally biased stretch (low complexity) spans 212 to 224; sequence SSSIPLQPISPQR. A compositionally biased stretch (basic and acidic residues) spans 227-238; that stretch reads RKSEESLHQVNR. A helical membrane pass occupies residues 263 to 283; that stretch reads VGIGYMAAVSVQVICILILYI. A glycan (N-linked (GlcNAc...) asparagine) is linked at asparagine 285. The next 7 membrane-spanning stretches (helical) occupy residues 297–317, 363–383, 400–420, 431–451, 465–485, 489–509, and 534–554; these read TVLFFVGSWWLTFTIPSVMWL, VLLFLIAWFLLSDAVATISAT, ALLSIIATSSGIIGATVWPII, IIVCCLLLLELVPLYGLLGFL, WYEIYPLGIIHGMVMGGLSSY, FYGLLIPPGSEAAFYALFAIT, and AFGFLAVLIALPIPLIWMVDV. A disordered region spans residues 575 to 598; that stretch reads HEDFESFEGSSDGHEAEGLMRDHD. A compositionally biased stretch (basic and acidic residues) spans 585–598; the sequence is SDGHEAEGLMRDHD.

This sequence belongs to the ATG22 family.

Its subcellular location is the vacuole membrane. Its function is as follows. Vacuolar effluxer which mediate the efflux of amino acids resulting from autophagic degradation. The release of autophagic amino acids allows the maintenance of protein synthesis and viability during nitrogen starvation. The sequence is that of Autophagy-related protein 22-1 (atg22-1) from Sclerotinia sclerotiorum (strain ATCC 18683 / 1980 / Ss-1) (White mold).